The sequence spans 110 residues: Ribonuclease P protein component 4 (110 aa).

The Zn(2+) site is built by Cys65, Cys68, Cys94, and Cys97.

Belongs to the eukaryotic/archaeal RNase P protein component 4 family. Consists of a catalytic RNA component and at least 5 protein subunits. Zn(2+) is required as a cofactor.

It is found in the cytoplasm. The enzyme catalyses Endonucleolytic cleavage of RNA, removing 5'-extranucleotides from tRNA precursor.. Its function is as follows. Part of ribonuclease P, a protein complex that generates mature tRNA molecules by cleaving their 5'-ends. In Methanococcus maripaludis (strain DSM 14266 / JCM 13030 / NBRC 101832 / S2 / LL), this protein is Ribonuclease P protein component 4.